Here is a 662-residue protein sequence, read N- to C-terminus: Bifunctional polymyxin resistance protein ArnA (662 aa).

The interval 1–307 (MTSKAVVFAY…ELGLVEGARL (307 aa)) is formyltransferase ArnAFT. The active-site Proton donor; for formyltransferase activity is H106. Residues R116 and 138 to 142 (IERAD) contribute to the (6R)-10-formyltetrahydrofolate site. The tract at residues 316–662 (RRTRVLILGV…EALREREAQA (347 aa)) is dehydrogenase ArnADH. NAD(+)-binding positions include D349 and 370-371 (DI). UDP-alpha-D-glucuronate is bound by residues A395, Y400, and 434–435 (TS). E436 functions as the Proton acceptor; for decarboxylase activity in the catalytic mechanism. UDP-alpha-D-glucuronate contacts are provided by residues R462, N493, 527-536 (RLVDGGAQKR), and Y614. R620 functions as the Proton donor; for decarboxylase activity in the catalytic mechanism.

This sequence in the N-terminal section; belongs to the Fmt family. UDP-L-Ara4N formyltransferase subfamily. The protein in the C-terminal section; belongs to the NAD(P)-dependent epimerase/dehydratase family. UDP-glucuronic acid decarboxylase subfamily. As to quaternary structure, homohexamer, formed by a dimer of trimers.

It catalyses the reaction UDP-alpha-D-glucuronate + NAD(+) = UDP-beta-L-threo-pentopyranos-4-ulose + CO2 + NADH. The catalysed reaction is UDP-4-amino-4-deoxy-beta-L-arabinose + (6R)-10-formyltetrahydrofolate = UDP-4-deoxy-4-formamido-beta-L-arabinose + (6S)-5,6,7,8-tetrahydrofolate + H(+). It participates in nucleotide-sugar biosynthesis; UDP-4-deoxy-4-formamido-beta-L-arabinose biosynthesis; UDP-4-deoxy-4-formamido-beta-L-arabinose from UDP-alpha-D-glucuronate: step 1/3. Its pathway is nucleotide-sugar biosynthesis; UDP-4-deoxy-4-formamido-beta-L-arabinose biosynthesis; UDP-4-deoxy-4-formamido-beta-L-arabinose from UDP-alpha-D-glucuronate: step 3/3. It functions in the pathway bacterial outer membrane biogenesis; lipopolysaccharide biosynthesis. Functionally, bifunctional enzyme that catalyzes the oxidative decarboxylation of UDP-glucuronic acid (UDP-GlcUA) to UDP-4-keto-arabinose (UDP-Ara4O) and the addition of a formyl group to UDP-4-amino-4-deoxy-L-arabinose (UDP-L-Ara4N) to form UDP-L-4-formamido-arabinose (UDP-L-Ara4FN). The modified arabinose is attached to lipid A and is required for resistance to polymyxin and cationic antimicrobial peptides. The polypeptide is Bifunctional polymyxin resistance protein ArnA (Pseudomonas aeruginosa (strain LESB58)).